Consider the following 291-residue polypeptide: Pyridoxal kinase PdxY (291 aa).

Residues serine 9 and 44-45 (TQ) each bind substrate. ATP is bound by residues aspartate 112, valine 144, glutamate 149, lysine 182, and 207–210 (RPHL). Substrate is bound at residue aspartate 221.

It belongs to the pyridoxine kinase family. PdxY subfamily. As to quaternary structure, homodimer. It depends on Mg(2+) as a cofactor.

It catalyses the reaction pyridoxal + ATP = pyridoxal 5'-phosphate + ADP + H(+). It participates in cofactor metabolism; pyridoxal 5'-phosphate salvage; pyridoxal 5'-phosphate from pyridoxal: step 1/1. Its function is as follows. Pyridoxal kinase involved in the salvage pathway of pyridoxal 5'-phosphate (PLP). Catalyzes the phosphorylation of pyridoxal to PLP. In Photobacterium profundum (strain SS9), this protein is Pyridoxal kinase PdxY.